The chain runs to 492 residues: Glutamyl-tRNA(Gln) amidotransferase subunit A (492 aa).

Residues Lys78 and Ser158 each act as charge relay system in the active site. The Acyl-ester intermediate role is filled by Ser182.

Belongs to the amidase family. GatA subfamily. As to quaternary structure, heterotrimer of A, B and C subunits.

It carries out the reaction L-glutamyl-tRNA(Gln) + L-glutamine + ATP + H2O = L-glutaminyl-tRNA(Gln) + L-glutamate + ADP + phosphate + H(+). Functionally, allows the formation of correctly charged Gln-tRNA(Gln) through the transamidation of misacylated Glu-tRNA(Gln) in organisms which lack glutaminyl-tRNA synthetase. The reaction takes place in the presence of glutamine and ATP through an activated gamma-phospho-Glu-tRNA(Gln). The sequence is that of Glutamyl-tRNA(Gln) amidotransferase subunit A from Rhodopseudomonas palustris (strain BisA53).